Reading from the N-terminus, the 105-residue chain is uncharacterized protein (105 aa).

A disordered region spans residues 1–27 (MQSPAMKRIKSSSHSRWDGSGSVNEMP).

Its subcellular location is the mitochondrion. This is an uncharacterized protein from Arabidopsis thaliana (Mouse-ear cress).